The sequence spans 262 residues: MWNLAGKELSSRLLLGTACYPSLEHMQQAIHNSGTEVITISIKRQTSAGLDGESFWQAVKKLDCHLLPNTAGCRNAEAAINTAEIARELFNTHWIKLEVIGDDYNLQPEPFELIKAARILIDRGFEVFPYCTDDLVLCQKLVDAGCKILMPWGAPIGSGKGLINPYALETLRYRFPDITLIIDAGIGKPSHAVQVMELGFDGVLLNTAVALANHPALMATAFRHAVIAGHQAFIGGMMSERNVAHPSTPLIDTPFWHQVNNL.

K96 functions as the Schiff-base intermediate with DXP in the catalytic mechanism. Residues G157, 184 to 185, and 206 to 207 contribute to the 1-deoxy-D-xylulose 5-phosphate site; these read AG and NT.

The protein belongs to the ThiG family. In terms of assembly, homotetramer. Forms heterodimers with either ThiH or ThiS.

It is found in the cytoplasm. The catalysed reaction is [ThiS sulfur-carrier protein]-C-terminal-Gly-aminoethanethioate + 2-iminoacetate + 1-deoxy-D-xylulose 5-phosphate = [ThiS sulfur-carrier protein]-C-terminal Gly-Gly + 2-[(2R,5Z)-2-carboxy-4-methylthiazol-5(2H)-ylidene]ethyl phosphate + 2 H2O + H(+). It participates in cofactor biosynthesis; thiamine diphosphate biosynthesis. Functionally, catalyzes the rearrangement of 1-deoxy-D-xylulose 5-phosphate (DXP) to produce the thiazole phosphate moiety of thiamine. Sulfur is provided by the thiocarboxylate moiety of the carrier protein ThiS. In vitro, sulfur can be provided by H(2)S. In Legionella pneumophila (strain Corby), this protein is Thiazole synthase.